Here is a 610-residue protein sequence, read N- to C-terminus: UvrABC system protein C (610 aa).

Residues 16 to 94 form the GIY-YIG domain; the sequence is NQPGVYRMYD…IKRYQPRYNV (79 aa). One can recognise a UVR domain in the interval 204–239; it reads SQVIDALVARMEEASRALRFEEAARLRDQIQAVRRV.

It belongs to the UvrC family. Interacts with UvrB in an incision complex.

The protein resides in the cytoplasm. Functionally, the UvrABC repair system catalyzes the recognition and processing of DNA lesions. UvrC both incises the 5' and 3' sides of the lesion. The N-terminal half is responsible for the 3' incision and the C-terminal half is responsible for the 5' incision. The chain is UvrABC system protein C from Edwardsiella ictaluri (strain 93-146).